Here is a 356-residue protein sequence, read N- to C-terminus: Cyclin-A1-4 (356 aa).

It belongs to the cyclin family. Cyclin AB subfamily.

This Oryza sativa subsp. japonica (Rice) protein is Cyclin-A1-4 (CYCA1-4).